The sequence spans 685 residues: Protein arginine N-methyltransferase 7 (685 aa).

SAM-dependent MTase PRMT-type domains lie at 14 to 355 (QATW…YSLW) and 364 to 685 (AESI…LKSI).

The protein belongs to the class I-like SAM-binding methyltransferase superfamily. Protein arginine N-methyltransferase family. PRMT7 subfamily.

In terms of biological role, essential arginine methyltransferase that can both catalyze the formation of omega-N monomethylarginine (MMA) and symmetrical dimethylarginine (sDMA). Specifically mediates the symmetrical dimethylation of arginine residues in the small nuclear ribonucleoproteins SmD1 and SmD3. This is Protein arginine N-methyltransferase 7 (Art7) from Drosophila willistoni (Fruit fly).